Consider the following 332-residue polypeptide: tRNA dimethylallyltransferase 2 (332 aa).

Residue 15-22 (GPTASGKT) coordinates ATP. 17-22 (TASGKT) contributes to the substrate binding site. Interaction with substrate tRNA stretches follow at residues 40–43 (DSVM) and 164–168 (QRIQR).

It belongs to the IPP transferase family. Monomer. Requires Mg(2+) as cofactor.

The catalysed reaction is adenosine(37) in tRNA + dimethylallyl diphosphate = N(6)-dimethylallyladenosine(37) in tRNA + diphosphate. Its function is as follows. Catalyzes the transfer of a dimethylallyl group onto the adenine at position 37 in tRNAs that read codons beginning with uridine, leading to the formation of N6-(dimethylallyl)adenosine (i(6)A). The protein is tRNA dimethylallyltransferase 2 of Hahella chejuensis (strain KCTC 2396).